Here is a 365-residue protein sequence, read N- to C-terminus: Mitogen-activated protein kinase p38b (365 aa).

A Protein kinase domain is found at Y24–M311. ATP contacts are provided by residues V30–V38 and K53. The Proton acceptor role is filled by D153. T183 is subject to Phosphothreonine. The TXY motif lies at T183–Y185. Position 185 is a phosphotyrosine (Y185).

Belongs to the protein kinase superfamily. CMGC Ser/Thr protein kinase family. MAP kinase subfamily. It depends on Mg(2+) as a cofactor. In terms of processing, dually phosphorylated on Thr-183 and Tyr-185, which activates the enzyme. At mid-embryogenesis, highest expression is seen in developing anterior and posterior midguts. Almost ubiquitous expression throughout all development.

The protein resides in the nucleus. It carries out the reaction L-seryl-[protein] + ATP = O-phospho-L-seryl-[protein] + ADP + H(+). It catalyses the reaction L-threonyl-[protein] + ATP = O-phospho-L-threonyl-[protein] + ADP + H(+). With respect to regulation, activated by threonine and tyrosine phosphorylation by Mkk3. In terms of biological role, kinase involved in dpp signal transduction pathway in the process of wing morphogenesis when the levels of dpp are enhanced or inhibited. May down-regulate insect immunity gene expression after prolonged infection. The chain is Mitogen-activated protein kinase p38b from Drosophila melanogaster (Fruit fly).